A 179-amino-acid chain; its full sequence is Large ribosomal subunit protein uL10 (179 aa).

It belongs to the universal ribosomal protein uL10 family. Part of the ribosomal stalk of the 50S ribosomal subunit. The N-terminus interacts with L11 and the large rRNA to form the base of the stalk. The C-terminus forms an elongated spine to which L12 dimers bind in a sequential fashion forming a multimeric L10(L12)X complex.

Forms part of the ribosomal stalk, playing a central role in the interaction of the ribosome with GTP-bound translation factors. The sequence is that of Large ribosomal subunit protein uL10 from Kosmotoga olearia (strain ATCC BAA-1733 / DSM 21960 / TBF 19.5.1).